The following is a 501-amino-acid chain: MNGGDDAATSGPPPSLEWRFSQVFGERTAGEEVQEVDIISAIEFDKSGDHLATGDRGGRVVLFERTDTKDHGGSRKDLEQTDYPVRHPEFRYKTEFQSHEPEFDYLKSLEIEEKINKIRWCQPANGALFLLSTNDKTIKYWKVQEKKIKKISEMNIDPSESSNIPPQLVTNGLPADKGHDYLSKDFSFPPGGIPSLRLPVVVTSQETNLVARCRRVYAHAHDYHINSISNSSDGETFISADDLRVNLWNLEISNQSFNIVDVKPTNMEDLTEVITSAEFHPIHCNMLAYSSSKGSIRLIDMRQSALCDSHTKLFEEPEAPGSRSFFTEIIASISDIKFSKDGRYILSRDYMTLKLWDINMDSGPVASYQVHEHLRPRLCDLYENDSIFDKFECCLSGDGLRVATGSYSNLFRVFGASQGSTEAATLEASKNPMRRQIQTPARPSRSIGSMTRVVRRGSESPGTEANGNAYDFTTKLLHMAWHPTENSIACAAANSLYMYYA.

Methionine 1 bears the N-acetylmethionine mark. WD repeat units lie at residues 34 to 73 (QEVD…DHGG), 110 to 151 (EIEE…IKKI), 220 to 258 (AHDY…QSFN), 269 to 309 (DLTE…LCDS), and 328 to 366 (EIIA…GPVA). Residues 439 to 449 (TPARPSRSIGS) are compositionally biased toward polar residues. The segment at 439–466 (TPARPSRSIGSMTRVVRRGSESPGTEAN) is disordered. The WD 6 repeat unit spans residues 471 to 501 (DFTTKLLHMAWHPTENSIACAAANSLYMYYA).

The protein belongs to the phosphatase 2A regulatory subunit B family. As to quaternary structure, PP2A consists of a common heteromeric enzyme, composed of a catalytic subunit (subunits C), a constant regulatory subunit (subunit A), and a variety of regulatory subunits such as subunits B (the R2/B/PR55/B55, R3/B''/PR72/PR130/PR59 and R5/B'/B56 families). Interacts with SIC/RON3. As to expression, expressed ubiquitously.

The B regulatory subunit may modulate substrate selectivity and catalytic activity, and may also direct the localization of the catalytic enzyme to a particular subcellular compartment. This chain is Serine/threonine protein phosphatase 2A 55 kDa regulatory subunit B beta isoform (PP2AB2), found in Arabidopsis thaliana (Mouse-ear cress).